Consider the following 414-residue polypeptide: Gamma-glutamyl phosphate reductase (414 aa).

The protein belongs to the gamma-glutamyl phosphate reductase family.

It localises to the cytoplasm. The catalysed reaction is L-glutamate 5-semialdehyde + phosphate + NADP(+) = L-glutamyl 5-phosphate + NADPH + H(+). It participates in amino-acid biosynthesis; L-proline biosynthesis; L-glutamate 5-semialdehyde from L-glutamate: step 2/2. Its function is as follows. Catalyzes the NADPH-dependent reduction of L-glutamate 5-phosphate into L-glutamate 5-semialdehyde and phosphate. The product spontaneously undergoes cyclization to form 1-pyrroline-5-carboxylate. In Geobacillus thermodenitrificans (strain NG80-2), this protein is Gamma-glutamyl phosphate reductase.